Reading from the N-terminus, the 92-residue chain is uncharacterized protein (92 aa).

It to M.jannaschii MJ0782.1.

This is an uncharacterized protein from Methanothermobacter thermautotrophicus (strain ATCC 29096 / DSM 1053 / JCM 10044 / NBRC 100330 / Delta H) (Methanobacterium thermoautotrophicum).